Here is a 701-residue protein sequence, read N- to C-terminus: Glycine--tRNA ligase beta subunit (701 aa).

Belongs to the class-II aminoacyl-tRNA synthetase family. In terms of assembly, tetramer of two alpha and two beta subunits.

It is found in the cytoplasm. It catalyses the reaction tRNA(Gly) + glycine + ATP = glycyl-tRNA(Gly) + AMP + diphosphate. This is Glycine--tRNA ligase beta subunit from Anaeromyxobacter sp. (strain K).